Reading from the N-terminus, the 300-residue chain is Enoyl-CoA hydratase domain-containing protein 3, mitochondrial (300 aa).

The N-terminal 66 residues, 1-66, are a transit peptide targeting the mitochondrion; the sequence is MALVAGLRAF…RNIVLSNPRR (66 aa). Residues 32–54 are disordered; that stretch reads SPGSARPAGPESEPRLTSTRQQD. At Lys-110 the chain carries N6-succinyllysine.

Belongs to the enoyl-CoA hydratase/isomerase family.

It localises to the mitochondrion. May play a role in fatty acid biosynthesis and insulin sensitivity. This chain is Enoyl-CoA hydratase domain-containing protein 3, mitochondrial, found in Rattus norvegicus (Rat).